Consider the following 301-residue polypeptide: MSQLPLSGTFTALVTPFTPDGEAVDFDALDALVEAQIAGGVSGLVPCGTTGESPTLSEAETTAVIRRVVEAARGRVPVIAGTGSFSTKKTIEASRAALAAGAAGVMIVMPYYSKPSQDGLREHTLAVARAVPAPIVLYNIPGRTVVDLSAETTERICAAAPNVVAIKDASGNVFRCQELVRRLGDRLTILSGDDALTLAMMALGAQGVISVTSNVLPRETSAVTRRFLAGDLAGARAAHLALLELHGLLFVEPNPAPAKAALAALGRMSAAVRLPLVPAGEATRQQIAEAMRRLEARREAS.

Thr50 provides a ligand contact to pyruvate. Tyr138 functions as the Proton donor/acceptor in the catalytic mechanism. Residue Lys167 is the Schiff-base intermediate with substrate of the active site. Position 209 (Ile209) interacts with pyruvate.

It belongs to the DapA family. As to quaternary structure, homotetramer; dimer of dimers.

The protein resides in the cytoplasm. It catalyses the reaction L-aspartate 4-semialdehyde + pyruvate = (2S,4S)-4-hydroxy-2,3,4,5-tetrahydrodipicolinate + H2O + H(+). The protein operates within amino-acid biosynthesis; L-lysine biosynthesis via DAP pathway; (S)-tetrahydrodipicolinate from L-aspartate: step 3/4. Functionally, catalyzes the condensation of (S)-aspartate-beta-semialdehyde [(S)-ASA] and pyruvate to 4-hydroxy-tetrahydrodipicolinate (HTPA). The sequence is that of 4-hydroxy-tetrahydrodipicolinate synthase from Sorangium cellulosum (strain So ce56) (Polyangium cellulosum (strain So ce56)).